The primary structure comprises 154 residues: MLTVDFIDDNAQIDAKHLPEIERLLIFAAEQEGIDEEAEVAVSFVDENEIQAINKAYRNKDAVTDVISFALEEGEDDFEMSDEPRVLGDIIICVKRALEQAEEYGHSFERELGFLSLHGLLHLLGYDHMNESDEARMFGRQDEILNAFGLRRDV.

Zn(2+) contacts are provided by histidine 118, histidine 122, and histidine 128.

Belongs to the endoribonuclease YbeY family. The cofactor is Zn(2+).

The protein resides in the cytoplasm. In terms of biological role, single strand-specific metallo-endoribonuclease involved in late-stage 70S ribosome quality control and in maturation of the 3' terminus of the 16S rRNA. This chain is Endoribonuclease YbeY, found in Macrococcus caseolyticus (strain JCSC5402) (Macrococcoides caseolyticum).